The sequence spans 91 residues: MSFFTMCVLAAGIGMALGTLGTGIGQGLAVKSAVEGVSRNPGASGKILTTMMIGLAMIESLAIYALVVCLIILFANPYKEIALELAKTVAK.

A run of 2 helical transmembrane segments spans residues 4-24 (FTMC…GTGI) and 53-73 (IGLA…LIIL).

The protein belongs to the ATPase C chain family. As to quaternary structure, F-type ATPases have 2 components, F(1) - the catalytic core - and F(0) - the membrane proton channel. F(1) has five subunits: alpha(3), beta(3), gamma(1), delta(1), epsilon(1). F(0) has three main subunits: a(1), b(2) and c(10-14). The alpha and beta chains form an alternating ring which encloses part of the gamma chain. F(1) is attached to F(0) by a central stalk formed by the gamma and epsilon chains, while a peripheral stalk is formed by the delta and b chains.

The protein resides in the cell inner membrane. Functionally, f(1)F(0) ATP synthase produces ATP from ADP in the presence of a proton or sodium gradient. F-type ATPases consist of two structural domains, F(1) containing the extramembraneous catalytic core and F(0) containing the membrane proton channel, linked together by a central stalk and a peripheral stalk. During catalysis, ATP synthesis in the catalytic domain of F(1) is coupled via a rotary mechanism of the central stalk subunits to proton translocation. Its function is as follows. Key component of the F(0) channel; it plays a direct role in translocation across the membrane. A homomeric c-ring of between 10-14 subunits forms the central stalk rotor element with the F(1) delta and epsilon subunits. The protein is ATP synthase subunit c of Geotalea uraniireducens (strain Rf4) (Geobacter uraniireducens).